Consider the following 48-residue polypeptide: M-oxotoxin-Ot1a (48 aa).

Expressed by the venom gland.

The protein resides in the secreted. It is found in the target cell membrane. Functionally, disrupts cell membranes, particularly those rich in phosphocholine, through formation of pores. Has antimicrobial activity against Gram-negative bacterium E.coli, Gram-positive bacteria B.subtilis and S.aureus, and hemolytic activity against sheep, pig and guinea pig erythrocytes. Has insecticidal activity against S.frugiperda ovarian cells by opening non-selective ion channels. Enhances the insecticidal activity of spider venom neurotoxic peptides. The polypeptide is M-oxotoxin-Ot1a (Oxyopes takobius (Lynx spider)).